Reading from the N-terminus, the 286-residue chain is 4-diphosphocytidyl-2-C-methyl-D-erythritol kinase (286 aa).

The active site involves Lys-11. Pro-93–Ser-103 contributes to the ATP binding site. The active site involves Asp-135.

It belongs to the GHMP kinase family. IspE subfamily.

It catalyses the reaction 4-CDP-2-C-methyl-D-erythritol + ATP = 4-CDP-2-C-methyl-D-erythritol 2-phosphate + ADP + H(+). Its pathway is isoprenoid biosynthesis; isopentenyl diphosphate biosynthesis via DXP pathway; isopentenyl diphosphate from 1-deoxy-D-xylulose 5-phosphate: step 3/6. Catalyzes the phosphorylation of the position 2 hydroxy group of 4-diphosphocytidyl-2C-methyl-D-erythritol. In Prosthecochloris aestuarii (strain DSM 271 / SK 413), this protein is 4-diphosphocytidyl-2-C-methyl-D-erythritol kinase.